The primary structure comprises 357 residues: Popeye domain-containing protein 1 (357 aa).

The Extracellular portion of the chain corresponds to 1 to 38; sequence MDTTAISPLTPLGVIPDLKNATSVPFNETACENWKEIH. N-linked (GlcNAc...) asparagine glycosylation is found at Asn-20 and Asn-27. Residues 39-59 traverse the membrane as a helical segment; that stretch reads HLVFHVANICFAAGLVIPTTL. Residues 60-62 lie on the Cytoplasmic side of the membrane; sequence NLH. The chain crosses the membrane as a helical span at residues 63-83; it reads MIFLRGLLTVGCALFIIWATL. Over 84–89 the chain is Extracellular; sequence YRCALD. A helical transmembrane segment spans residues 90–110; that stretch reads IMIWNSVFLVVNLLHFIYLVY. At 111–357 the chain is on the cytoplasmic side; it reads KRRPIKIEKE…AEKLELQRLP (247 aa). Residues 309–323 show a composition bias toward low complexity; the sequence is GTSSSSSLRPGRTSP. The interval 309–357 is disordered; the sequence is GTSSSSSLRPGRTSPYLRTSAKMKPIEESVEDDVFEAPSAEKLELQRLP. Positions 347-357 are enriched in basic and acidic residues; it reads SAEKLELQRLP.

It belongs to the popeye family. As to quaternary structure, homodimer. Homodimerization requires the C-terminus cytoplasmic region. Expressed in the heart and skeletal muscle (at protein level). Isoform 1 and isoform 4: expressed in heart, muscle, brain, stomach, kidney, lung and spleen.

Its subcellular location is the lateral cell membrane. It localises to the cell junction. The protein localises to the tight junction. It is found in the membrane. The protein resides in the cell membrane. Its subcellular location is the sarcolemma. It localises to the caveola. Its function is as follows. Cell adhesion molecule involved in the establishment and/or maintenance of cell integrity. Involved in the formation and regulation of the tight junction (TJ) paracellular permeability barrier in epithelial cells. Induces primordial adhesive contact and aggregation of epithelial cells in a Ca(2+)-independent manner. Involved in epithelial movement during corneal sheet formation and regeneration. May play a role in VAMP3-mediated vesicular transport and recycling of receptor molecules. May play a role in the regulation of cell shape and movement by modulating the Rho-GTPase activity. May be involved in skeletal muscle and heart development as well as in the maintenance of heart function. May also be involved in striated muscle regeneration and in the regulation of cell spreading. In Gallus gallus (Chicken), this protein is Popeye domain-containing protein 1 (POPDC1).